The following is an 85-amino-acid chain: Toxin BmKaTX15 (85 aa).

The first 19 residues, 1–19, serve as a signal peptide directing secretion; sequence MNYLVFFSLALLVMTGVES. Residues 21–83 form the LCN-type CS-alpha/beta domain; it reads RDGYIADDKN…VPIRVPGKCN (63 aa). Disulfide bonds link cysteine 31–cysteine 82, cysteine 35–cysteine 55, cysteine 41–cysteine 65, and cysteine 45–cysteine 67.

The protein belongs to the long (4 C-C) scorpion toxin superfamily. Sodium channel inhibitor family. Alpha subfamily. As to expression, expressed by the venom gland.

The protein resides in the secreted. Alpha toxins bind voltage-independently at site-3 of sodium channels (Nav) and inhibit the inactivation of the activated channels, thereby blocking neuronal transmission. The polypeptide is Toxin BmKaTX15 (Olivierus martensii (Manchurian scorpion)).